We begin with the raw amino-acid sequence, 432 residues long: Glutamate-1-semialdehyde 2,1-aminomutase (432 aa).

Residue Lys266 is modified to N6-(pyridoxal phosphate)lysine.

Belongs to the class-III pyridoxal-phosphate-dependent aminotransferase family. HemL subfamily. In terms of assembly, homodimer. The cofactor is pyridoxal 5'-phosphate.

The protein resides in the cytoplasm. It catalyses the reaction (S)-4-amino-5-oxopentanoate = 5-aminolevulinate. It participates in porphyrin-containing compound metabolism; protoporphyrin-IX biosynthesis; 5-aminolevulinate from L-glutamyl-tRNA(Glu): step 2/2. This chain is Glutamate-1-semialdehyde 2,1-aminomutase, found in Janthinobacterium sp. (strain Marseille) (Minibacterium massiliensis).